The primary structure comprises 684 residues: Glycine--tRNA ligase beta subunit (684 aa).

The protein belongs to the class-II aminoacyl-tRNA synthetase family. As to quaternary structure, tetramer of two alpha and two beta subunits.

The protein resides in the cytoplasm. The catalysed reaction is tRNA(Gly) + glycine + ATP = glycyl-tRNA(Gly) + AMP + diphosphate. The polypeptide is Glycine--tRNA ligase beta subunit (Pseudomonas fluorescens (strain SBW25)).